A 266-amino-acid polypeptide reads, in one-letter code: Glucosamine-6-phosphate deaminase (266 aa).

Residue D72 is the Proton acceptor; for enolization step of the active site. The active-site For ring-opening step is D141. Catalysis depends on H143, which acts as the Proton acceptor; for ring-opening step. Catalysis depends on E148, which acts as the For ring-opening step.

This sequence belongs to the glucosamine/galactosamine-6-phosphate isomerase family. NagB subfamily. In terms of assembly, homohexamer.

It carries out the reaction alpha-D-glucosamine 6-phosphate + H2O = beta-D-fructose 6-phosphate + NH4(+). It functions in the pathway amino-sugar metabolism; N-acetylneuraminate degradation; D-fructose 6-phosphate from N-acetylneuraminate: step 5/5. Its activity is regulated as follows. Allosterically activated by N-acetylglucosamine 6-phosphate (GlcNAc6P). Its function is as follows. Catalyzes the reversible isomerization-deamination of glucosamine 6-phosphate (GlcN6P) to form fructose 6-phosphate (Fru6P) and ammonium ion. The chain is Glucosamine-6-phosphate deaminase from Salmonella typhi.